An 880-amino-acid polypeptide reads, in one-letter code: Leucine--tRNA ligase (880 aa).

The 'HIGH' region signature appears at 46–56; the sequence is PYPSGALHMGH. Residues 638–642 carry the 'KMSKS' region motif; that stretch reads KMSKS. Lys641 lines the ATP pocket.

The protein belongs to the class-I aminoacyl-tRNA synthetase family.

It is found in the cytoplasm. The catalysed reaction is tRNA(Leu) + L-leucine + ATP = L-leucyl-tRNA(Leu) + AMP + diphosphate. This is Leucine--tRNA ligase from Stenotrophomonas maltophilia (strain R551-3).